A 930-amino-acid polypeptide reads, in one-letter code: MDYSKTLNLPTTEFPMRANLPQREPEIGRFWDEIEVYQLVQAKNAGRPKFILHDGPPYANGHIHLGTSLNKILKDIVVKFKSMDGYNAPYVPGWDTHGLPIEQQAIKQLKIKRSALSPVEFRRMCREYALKFVDIQRAEFKRLGVRGEWHNPYLTLQPHFETRQIEVFGEMAKRGYIYKGLKSVYWCADCETALAEAEVEYAEKESPSIHVAFPVVNGRGLLPDQDAAIVIWTTTPWTIPSNVAICVHPEYAYVLLRSGGRAYLVARDLAGNFRELLGDPGAGVEREYRGEELEGVVCRHPFVERDSVVVLADYVTLEQGTGCVHIAPGHGEEDFALGQRYNLPVISPINGKGYFTAEAGNLDGIFYLDANPVVVRELEARGALVGYSRMRHQYPHCWRCKHPVFYRATEQWFASIDGFRRHLLEAIDRVQWIPGWGRDRIRGMVAGRGDWCISRQRVWGVPIPIFYCGDCGRAVITDETISHLKGLFAEHGSDVWYAWEAAELVPPGLVCPHCRGRGDFTKELDTMDVWFDSGSSHWAVLTQPDYWPDLQWPADMYLEGSDQHRGWFNSSLTTAVAVTGEPPYRAVLTHGFVVDEQGRKMSKSLGNVIEPMEVLKELGADILRLWVCSADYRGDLAVSPGILKQMSEAYRKIRNTFRFLLGNLQDFDPDRDTVAYTELTELDRYALLKLHRVTDRVLRAYREYEFHQVYHTLYNYCVTDLSAFYLNVIKDRLYCEPARSVNRRGAQTVLYAVLDSLVRLLVPVLAYTTEEVWGHFPANGKKPPSVQLLEMPEPNPEYLDDELERRWERLLAVRQDVLRALEAARQEKLIRDALEAEAVLYAEPELLEFLRENTVQLPVIFVTSSVRVLPAAEAGGEEAVSGTVAGLKVAVRRAPGTKCVRCWTYGETGVDPEHPEICPRCATVLSGLNL.

A 'HIGH' region motif is present at residues 57–67 (PYANGHIHLGT). Glu-559 is a binding site for L-isoleucyl-5'-AMP. The short motif at 600-604 (KMSKS) is the 'KMSKS' region element. Residue Lys-603 participates in ATP binding. Zn(2+) is bound by residues Cys-899, Cys-902, Cys-918, and Cys-921.

It belongs to the class-I aminoacyl-tRNA synthetase family. IleS type 1 subfamily. Monomer. Requires Zn(2+) as cofactor.

Its subcellular location is the cytoplasm. The catalysed reaction is tRNA(Ile) + L-isoleucine + ATP = L-isoleucyl-tRNA(Ile) + AMP + diphosphate. In terms of biological role, catalyzes the attachment of isoleucine to tRNA(Ile). As IleRS can inadvertently accommodate and process structurally similar amino acids such as valine, to avoid such errors it has two additional distinct tRNA(Ile)-dependent editing activities. One activity is designated as 'pretransfer' editing and involves the hydrolysis of activated Val-AMP. The other activity is designated 'posttransfer' editing and involves deacylation of mischarged Val-tRNA(Ile). The chain is Isoleucine--tRNA ligase from Desulforudis audaxviator (strain MP104C).